Reading from the N-terminus, the 458-residue chain is tRNA modification GTPase MnmE (458 aa).

Residues Arg-22, Glu-84, and Arg-123 each contribute to the (6S)-5-formyl-5,6,7,8-tetrahydrofolate site. Residues 220–379 (GIATAIIGRP…LEKAIADLFF (160 aa)) enclose the TrmE-type G domain. Asn-230 contributes to the K(+) binding site. Residues 230-235 (NVGKSS), 249-255 (TDIAGTT), and 274-277 (DTAG) contribute to the GTP site. Ser-234 contributes to the Mg(2+) binding site. Thr-249, Ile-251, and Thr-254 together coordinate K(+). Thr-255 is a Mg(2+) binding site. Lys-458 is a binding site for (6S)-5-formyl-5,6,7,8-tetrahydrofolate.

It belongs to the TRAFAC class TrmE-Era-EngA-EngB-Septin-like GTPase superfamily. TrmE GTPase family. Homodimer. Heterotetramer of two MnmE and two MnmG subunits. K(+) serves as cofactor.

It localises to the cytoplasm. Functionally, exhibits a very high intrinsic GTPase hydrolysis rate. Involved in the addition of a carboxymethylaminomethyl (cmnm) group at the wobble position (U34) of certain tRNAs, forming tRNA-cmnm(5)s(2)U34. The sequence is that of tRNA modification GTPase MnmE from Bacillus thuringiensis (strain Al Hakam).